Consider the following 463-residue polypeptide: 23S rRNA (uracil(1939)-C(5))-methyltransferase RlmD (463 aa).

The region spanning 14-78 (AVAPGSDPVV…PSYEQAHLLE (65 aa)) is the TRAM domain. Residues cysteine 91, cysteine 97, cysteine 100, and cysteine 179 each coordinate [4Fe-4S] cluster. Residues glutamine 287, phenylalanine 316, asparagine 321, glutamate 337, asparagine 365, and aspartate 386 each contribute to the S-adenosyl-L-methionine site. Cysteine 419 acts as the Nucleophile in catalysis.

This sequence belongs to the class I-like SAM-binding methyltransferase superfamily. RNA M5U methyltransferase family. RlmD subfamily.

It catalyses the reaction uridine(1939) in 23S rRNA + S-adenosyl-L-methionine = 5-methyluridine(1939) in 23S rRNA + S-adenosyl-L-homocysteine + H(+). In terms of biological role, catalyzes the formation of 5-methyl-uridine at position 1939 (m5U1939) in 23S rRNA. This Cupriavidus pinatubonensis (strain JMP 134 / LMG 1197) (Cupriavidus necator (strain JMP 134)) protein is 23S rRNA (uracil(1939)-C(5))-methyltransferase RlmD.